A 377-amino-acid chain; its full sequence is D-alanine--D-alanine ligase (377 aa).

An ATP-grasp domain is found at 140-349; it reads KELLTVNGIR…NAKLVDMLID (210 aa). Residue 170-225 coordinates ATP; that stretch reads VAELGNIVFVKAANQGSSVGISRVTNAEEYTEALSDSFQYDYKVLIEEAVNGAREL. 3 residues coordinate Mg(2+): Asp303, Glu316, and Asn318.

The protein belongs to the D-alanine--D-alanine ligase family. Requires Mg(2+) as cofactor. The cofactor is Mn(2+).

The protein localises to the cytoplasm. The catalysed reaction is 2 D-alanine + ATP = D-alanyl-D-alanine + ADP + phosphate + H(+). The protein operates within cell wall biogenesis; peptidoglycan biosynthesis. Functionally, cell wall formation. The chain is D-alanine--D-alanine ligase from Leuconostoc mesenteroides subsp. mesenteroides (strain ATCC 8293 / DSM 20343 / BCRC 11652 / CCM 1803 / JCM 6124 / NCDO 523 / NBRC 100496 / NCIMB 8023 / NCTC 12954 / NRRL B-1118 / 37Y).